The primary structure comprises 835 residues: Leucine--tRNA ligase (835 aa).

The 'HIGH' region motif lies at 36-46 (PYPSGKIHVGH). A 'KMSKS' region motif is present at residues 602–606 (KMSKS). Lys-605 is an ATP binding site.

The protein belongs to the class-I aminoacyl-tRNA synthetase family.

The protein resides in the cytoplasm. It carries out the reaction tRNA(Leu) + L-leucine + ATP = L-leucyl-tRNA(Leu) + AMP + diphosphate. This Rickettsia africae (strain ESF-5) protein is Leucine--tRNA ligase.